We begin with the raw amino-acid sequence, 276 residues long: Ribonuclease 3 (276 aa).

Residues 30 to 161 enclose the RNase III domain; that stretch reads LTAFIRSLFK…LTGAIYLDRG (132 aa). Position 74 (Glu74) interacts with Mg(2+). Asp78 is an active-site residue. Asp147 and Glu150 together coordinate Mg(2+). Glu150 is a catalytic residue. In terms of domain architecture, DRBM spans 188–257; it reads NHKSRLIEHT…AEEAMGALER (70 aa).

The protein belongs to the ribonuclease III family. As to quaternary structure, homodimer. The cofactor is Mg(2+).

The protein localises to the cytoplasm. The enzyme catalyses Endonucleolytic cleavage to 5'-phosphomonoester.. Digests double-stranded RNA. Involved in the processing of primary rRNA transcript to yield the immediate precursors to the large and small rRNAs (23S and 16S). Processes some mRNAs, and tRNAs when they are encoded in the rRNA operon. Processes pre-crRNA and tracrRNA of type II CRISPR loci if present in the organism. The chain is Ribonuclease 3 from Chlorobium luteolum (strain DSM 273 / BCRC 81028 / 2530) (Pelodictyon luteolum).